The following is a 277-amino-acid chain: Glutamate racemase (277 aa).

Residues 16–17 (DS) and 48–49 (YG) contribute to the substrate site. The Proton donor/acceptor role is filled by cysteine 79. A substrate-binding site is contributed by 80-81 (NT). Cysteine 191 serves as the catalytic Proton donor/acceptor. Position 192–193 (192–193 (TH)) interacts with substrate.

Belongs to the aspartate/glutamate racemases family.

The enzyme catalyses L-glutamate = D-glutamate. Its pathway is cell wall biogenesis; peptidoglycan biosynthesis. In terms of biological role, provides the (R)-glutamate required for cell wall biosynthesis. The polypeptide is Glutamate racemase (Symbiobacterium thermophilum (strain DSM 24528 / JCM 14929 / IAM 14863 / T)).